Here is a 1337-residue protein sequence, read N- to C-terminus: uncharacterized protein (1337 aa).

2 disordered regions span residues 1–94 and 119–174; these read MPTS…QSSA and ARDI…PSFF. 2 stretches are compositionally biased toward low complexity: residues 18-37 and 68-79; these read SNTS…ASGS and SSTHFQSSHSVS. A compositionally biased stretch (polar residues) spans 80–94; the sequence is NAHNQSPLNQSQSSA. Low complexity predominate over residues 123–147; that stretch reads PQQPSHSQNPSSSSSSSSSQSSQHS. The segment covering 157–167 has biased composition (basic and acidic residues); that stretch reads NEKKSLDDPSP. Helical transmembrane passes span 209-229, 241-261, 267-287, 328-348, 361-381, and 387-407; these read GLKP…LVLA, FFVV…PMLW, FLLL…ATVA, VRPL…ALFI, CVFS…YPYF, and LFFI…TLFI. Disordered regions lie at residues 623-662 and 868-894; these read SHVR…SHKS and YDEN…DADH. The segment covering 626–644 has biased composition (polar residues); it reads RTGSNNSEAPLAAKTSTTK. Basic and acidic residues predominate over residues 868–880; it reads YDENIHNDVDKDM. The next 6 membrane-spanning stretches (helical) occupy residues 917-937, 975-995, 997-1017, 1021-1041, 1066-1086, and 1275-1295; these read MNVF…PAFC, IFGT…GSGH, LGNA…IQFI, FVIL…LTVT, FLTV…PQPR, and FAVG…IMFI.

Its subcellular location is the membrane. This is an uncharacterized protein from Schizosaccharomyces pombe (strain 972 / ATCC 24843) (Fission yeast).